Consider the following 444-residue polypeptide: Type VII secretion system protein EssB (444 aa).

Residues 1-229 (MVKNHDPKNE…RKVGHTVFKW (229 aa)) are Cytoplasmic-facing. A helical transmembrane segment spans residues 230-250 (VAIGMTTLSVLLIAFLAFLYF). The Extracellular portion of the chain corresponds to 251-444 (SVMKHNERIE…EKRQEAERKK (194 aa)). The segment at 366 to 444 (KNNGDLSNDK…EKRQEAERKK (79 aa)) is disordered. The segment covering 372–444 (SNDKRSEETK…EKRQEAERKK (73 aa)) has biased composition (basic and acidic residues). A coiled-coil region spans residues 387 to 443 (LQDILDKEKQVKDEKAKSEEEKAKAKDEKLKQQEENEKKQKEQAQKDKEKRQEAERK).

The protein belongs to the EssB family.

The protein resides in the cell membrane. Component of the type VII secretion system (Ess). Required for the secretion of EsxA. The polypeptide is Type VII secretion system protein EssB (Staphylococcus aureus (strain MRSA252)).